Consider the following 343-residue polypeptide: tRNA N6-adenosine threonylcarbamoyltransferase (343 aa).

His-115 and His-119 together coordinate Fe cation. Residues 137–141 (IVSGG), Asp-170, Gly-183, Asp-187, and Asn-276 contribute to the substrate site. Asp-304 is a binding site for Fe cation.

It belongs to the KAE1 / TsaD family. It depends on Fe(2+) as a cofactor.

It is found in the cytoplasm. It carries out the reaction L-threonylcarbamoyladenylate + adenosine(37) in tRNA = N(6)-L-threonylcarbamoyladenosine(37) in tRNA + AMP + H(+). Its function is as follows. Required for the formation of a threonylcarbamoyl group on adenosine at position 37 (t(6)A37) in tRNAs that read codons beginning with adenine. Is involved in the transfer of the threonylcarbamoyl moiety of threonylcarbamoyl-AMP (TC-AMP) to the N6 group of A37, together with TsaE and TsaB. TsaD likely plays a direct catalytic role in this reaction. This chain is tRNA N6-adenosine threonylcarbamoyltransferase, found in Staphylococcus carnosus (strain TM300).